A 183-amino-acid chain; its full sequence is Ribosome maturation factor RimM (183 aa).

A PRC barrel domain is found at 95 to 171 (DPDEFYDHEL…VVVIDPPEGL (77 aa)).

It belongs to the RimM family. Binds ribosomal protein uS19.

Its subcellular location is the cytoplasm. Its function is as follows. An accessory protein needed during the final step in the assembly of 30S ribosomal subunit, possibly for assembly of the head region. Essential for efficient processing of 16S rRNA. May be needed both before and after RbfA during the maturation of 16S rRNA. It has affinity for free ribosomal 30S subunits but not for 70S ribosomes. The protein is Ribosome maturation factor RimM of Rhodococcus opacus (strain B4).